A 2798-amino-acid chain; its full sequence is Kinesin-like protein KIN-12F (2798 aa).

Residues 1–165 form a disordered region; the sequence is MVRDLAAVRR…RPPMSSGQRG (165 aa). Low complexity-rich tracts occupy residues 8 to 22 and 31 to 58; these read VRRT…SSAS and PVDA…QPPQ. In terms of domain architecture, Kinesin motor spans 210–547; it reads NVQVVIRVRP…LKFAQRARLI (338 aa). 291-298 contacts ATP; sequence GQTGSGKT. A compositionally biased stretch (acidic residues) spans 600-615; sequence DVDDGTESMNMDEEND. The tract at residues 600–621 is disordered; the sequence is DVDDGTESMNMDEENDNDAHDR. 5 coiled-coil regions span residues 792-835, 890-987, 1014-1108, 1281-1322, and 2130-2333; these read ELKR…HSSN, LAEE…HRRQ, LKRM…VMKE, QRAM…LKNE, and ELVD…VRQQ. The interval 2338–2359 is disordered; the sequence is PSSGQATSSLEGGMGDFTDSSR. Coiled-coil stretches lie at residues 2361–2427 and 2545–2758; these read SREI…VKSD and ESKE…LKLK. The segment at 2772 to 2798 is disordered; sequence RSESSSLSSGRSRSPSVCRSPSISSFR. Low complexity predominate over residues 2774 to 2798; it reads ESSSLSSGRSRSPSVCRSPSISSFR.

The protein belongs to the TRAFAC class myosin-kinesin ATPase superfamily. Kinesin family. KIN-12 subfamily.

In Oryza sativa subsp. japonica (Rice), this protein is Kinesin-like protein KIN-12F.